The following is a 454-amino-acid chain: tRNA-2-methylthio-N(6)-dimethylallyladenosine synthase (454 aa).

An MTTase N-terminal domain is found at 6-122 (RRYHITTFGC…LQDLLQEVLA (117 aa)). The [4Fe-4S] cluster site is built by cysteine 15, cysteine 51, cysteine 85, cysteine 157, cysteine 161, and cysteine 164. The 238-residue stretch at 143–380 (RESTVTAWVN…NHLVAIKAAE (238 aa)) folds into the Radical SAM core domain. The TRAM domain occupies 383–447 (QRYLGRIEEV…AFSLTGEPVK (65 aa)).

This sequence belongs to the methylthiotransferase family. MiaB subfamily. As to quaternary structure, monomer. Requires [4Fe-4S] cluster as cofactor.

The protein localises to the cytoplasm. It catalyses the reaction N(6)-dimethylallyladenosine(37) in tRNA + (sulfur carrier)-SH + AH2 + 2 S-adenosyl-L-methionine = 2-methylsulfanyl-N(6)-dimethylallyladenosine(37) in tRNA + (sulfur carrier)-H + 5'-deoxyadenosine + L-methionine + A + S-adenosyl-L-homocysteine + 2 H(+). Catalyzes the methylthiolation of N6-(dimethylallyl)adenosine (i(6)A), leading to the formation of 2-methylthio-N6-(dimethylallyl)adenosine (ms(2)i(6)A) at position 37 in tRNAs that read codons beginning with uridine. The polypeptide is tRNA-2-methylthio-N(6)-dimethylallyladenosine synthase (Gloeothece citriformis (strain PCC 7424) (Cyanothece sp. (strain PCC 7424))).